Here is a 192-residue protein sequence, read N- to C-terminus: Ion-translocating oxidoreductase complex subunit A (192 aa).

The next 6 helical transmembrane spans lie at 5–25 (LLLLVGTVLVNNFVLVKFLGL), 39–59 (IGMSMATTFVLTLASILSYLV), 65–85 (LPFDLGYLRTMSFILVIAVVV), 102–122 (ALGIYLPLITTNCAVLGVALL), 134–154 (AIFGFGAAVGFSLVLILFSAM), and 171–191 (AIAMVTAGLMSLAFMGFTGLV).

Belongs to the NqrDE/RnfAE family. As to quaternary structure, the complex is composed of six subunits: RnfA, RnfB, RnfC, RnfD, RnfE and RnfG.

The protein resides in the cell inner membrane. In terms of biological role, part of a membrane-bound complex that couples electron transfer with translocation of ions across the membrane. The sequence is that of Ion-translocating oxidoreductase complex subunit A from Shewanella piezotolerans (strain WP3 / JCM 13877).